Here is a 305-residue protein sequence, read N- to C-terminus: Sulfate adenylyltransferase subunit 2 (305 aa).

The segment at 283 to 305 (RQGRVIDHDQSASMEKKKQEGYF) is disordered.

The protein belongs to the PAPS reductase family. CysD subfamily. As to quaternary structure, heterodimer composed of CysD, the smaller subunit, and CysN.

It catalyses the reaction sulfate + ATP + H(+) = adenosine 5'-phosphosulfate + diphosphate. It participates in sulfur metabolism; hydrogen sulfide biosynthesis; sulfite from sulfate: step 1/3. Functionally, with CysN forms the ATP sulfurylase (ATPS) that catalyzes the adenylation of sulfate producing adenosine 5'-phosphosulfate (APS) and diphosphate, the first enzymatic step in sulfur assimilation pathway. APS synthesis involves the formation of a high-energy phosphoric-sulfuric acid anhydride bond driven by GTP hydrolysis by CysN coupled to ATP hydrolysis by CysD. This Caulobacter sp. (strain K31) protein is Sulfate adenylyltransferase subunit 2.